The chain runs to 324 residues: NADH-dependent D-xylose reductase (324 aa).

Tyr54 serves as the catalytic Proton donor. His116 provides a ligand contact to substrate. 220–286 (SSFGPQSFLE…SNSPDRMAQN (67 aa)) serves as a coordination point for NAD(+).

Belongs to the aldo/keto reductase family.

The catalysed reaction is xylitol + NAD(+) = D-xylose + NADH + H(+). It carries out the reaction xylitol + NADP(+) = D-xylose + NADPH + H(+). It participates in carbohydrate metabolism; D-xylose degradation. Functionally, reduces D-xylose into xylitol. Preferentially utilizes NADH as a cosubstrate. The chain is NADH-dependent D-xylose reductase (XYL1) from Candida parapsilosis (Yeast).